The primary structure comprises 690 residues: Iron-regulated transcriptional activator AFT1 (690 aa).

Residues 1–21 form a disordered region; the sequence is MEGFNPADIEHASPINSSDSH. Asp-110 provides a ligand contact to Zn(2+). The DNA site is built by Lys-111, Lys-115, Ile-131, Glu-132, Arg-133, Ser-134, Asp-135, and Lys-138. Position 143 (Cys-143) interacts with Zn(2+). The span at 148–159 shows a compositional bias: basic residues; the sequence is RGRNARRKRKDK. Residues 148 to 205 form a disordered region; the sequence is RGRNARRKRKDKPKGQDHEDEKSKINDDELEYASPSNATVTNGPQTSPDQTSSIKPKK. Basic and acidic residues predominate over residues 160–174; it reads PKGQDHEDEKSKIND. A compositionally biased stretch (polar residues) spans 181 to 201; the sequence is SPSNATVTNGPQTSPDQTSSI. A Zn(2+)-binding site is contributed by Cys-215. DNA is bound at residue Lys-226. Zn(2+) is bound by residues His-239 and His-241. DNA is bound at residue Asn-263. Positions 291–293 match the CDC [2Fe-2S] cluster binding motif motif; it reads CDC. 2 disordered regions span residues 335 to 357 and 612 to 655; these read PCLPSVNNTGSINTNNVRKPKSQ and SSNE…VQKD. Positions 339-351 are enriched in polar residues; the sequence is SVNNTGSINTNNV. A compositionally biased stretch (low complexity) spans 621 to 638; sequence HQYGPQQQPPQQLQYHQN. Residues 639–649 are compositionally biased toward basic and acidic residues; sequence QPHDGHNHEQH.

Homodimer. Dimerization decreases the DNA-binding activity.

The protein localises to the nucleus. Dimerization via the binding of Fe(2+) or a [2Fe-2S] cluster decreases the DNA-binding activity. Transcription factor that activates the genes for FRE1, FRE2 and FET3 in response to iron deprivationand thereby plays a central role in iron homeostasis. Also required for the expression of LSO1. Recognizes the consensus iron-responsive element (Fe-RE) sequence 5'-CACCC-3' in the promoters of target genes. Iron could interact directly with AFT1 and inhibits its activity. In high iron condition, the presence of Fe(2+) or [2Fe-2S] cluster leads to dimerization, which in turn leads to a decrease in DNA affinity. In Saccharomyces cerevisiae (strain ATCC 204508 / S288c) (Baker's yeast), this protein is Iron-regulated transcriptional activator AFT1.